Consider the following 298-residue polypeptide: Multifunctional dioxygenase ausE (298 aa).

2 residues coordinate substrate: arginine 72 and glutamine 127. Histidine 130 and aspartate 132 together coordinate Fe cation. Threonine 167 contacts substrate. Residue histidine 214 coordinates Fe cation. Arginine 226 lines the substrate pocket.

This sequence belongs to the PhyH family. As to quaternary structure, homodimer. Fe cation serves as cofactor.

The catalysed reaction is preaustinoid A1 + 2-oxoglutarate + O2 = preaustinoid A2 + succinate + CO2 + H2O. It carries out the reaction preaustinoid A2 + 2-oxoglutarate + O2 = preaustinoid A3 + succinate + CO2 + H2O. It catalyses the reaction berkeleyone A + 2-oxoglutarate + O2 = preaustinoid A + succinate + CO2 + H2O. The protein operates within secondary metabolite biosynthesis; terpenoid biosynthesis. In terms of biological role, multifunctional dioxygenase; part of the gene cluster B that mediates the biosynthesis of austinol and dehydroaustinol, two fungal meroterpenoids. The first step of the pathway is the synthesis of 3,5-dimethylorsellinic acid by the polyketide synthase ausA. 3,5-dimethylorsellinic acid is then prenylated by the polyprenyl transferase ausN. Further epoxidation by the FAD-dependent monooxygenase ausM and cyclization by the probable terpene cyclase ausL lead to the formation of protoaustinoid A. Protoaustinoid A is then oxidized to spiro-lactone preaustinoid A3 by the combined action of the FAD-binding monooxygenases ausB and ausC, and the dioxygenase ausE. Acid-catalyzed keto-rearrangement and ring contraction of the tetraketide portion of preaustinoid A3 by ausJ lead to the formation of preaustinoid A4. The aldo-keto reductase ausK, with the help of ausH, is involved in the next step by transforming preaustinoid A4 into isoaustinone which is in turn hydroxylated by the P450 monooxygenase ausI to form austinolide. Finally, the cytochrome P450 monooxygenase ausG modifies austinolide to austinol. Austinol can be further modified to dehydroaustinol which forms a diffusible complex with diorcinol that initiates conidiation. Due to genetic rearrangements of the clusters and the subsequent loss of some enzymes, the end products of the Emericella nidulans austinoid biosynthesis clusters are austinol and dehydroaustinol, even if additional enzymes, such as the O-acetyltransferase ausQ and the cytochrome P450 monooxygenase ausR are still functional. This Emericella nidulans (strain FGSC A4 / ATCC 38163 / CBS 112.46 / NRRL 194 / M139) (Aspergillus nidulans) protein is Multifunctional dioxygenase ausE.